Reading from the N-terminus, the 178-residue chain is ATP synthase subunit delta (178 aa).

This sequence belongs to the ATPase delta chain family. In terms of assembly, F-type ATPases have 2 components, F(1) - the catalytic core - and F(0) - the membrane proton channel. F(1) has five subunits: alpha(3), beta(3), gamma(1), delta(1), epsilon(1). F(0) has three main subunits: a(1), b(2) and c(10-14). The alpha and beta chains form an alternating ring which encloses part of the gamma chain. F(1) is attached to F(0) by a central stalk formed by the gamma and epsilon chains, while a peripheral stalk is formed by the delta and b chains.

The protein resides in the cell membrane. Its function is as follows. F(1)F(0) ATP synthase produces ATP from ADP in the presence of a proton or sodium gradient. F-type ATPases consist of two structural domains, F(1) containing the extramembraneous catalytic core and F(0) containing the membrane proton channel, linked together by a central stalk and a peripheral stalk. During catalysis, ATP synthesis in the catalytic domain of F(1) is coupled via a rotary mechanism of the central stalk subunits to proton translocation. In terms of biological role, this protein is part of the stalk that links CF(0) to CF(1). It either transmits conformational changes from CF(0) to CF(1) or is implicated in proton conduction. The chain is ATP synthase subunit delta from Moorella thermoacetica (strain ATCC 39073 / JCM 9320).